The sequence spans 632 residues: MLYHETFDVIVVGGGHAGTEAALASARTGQKTLLLTHNIDTLGQMSCNPAIGGIGKGHLVKEVDAMGGLMAQAIDHAGIQFRTLNASKGPAVRATRAQADRALYKAYVRDFLENAPNLTLFQQAVDDLIVEQDQVRGVITQMGLKFHAKAVVLTVGTFLGGKIHIGLQSSSGGRAGDPPSIALADRLRELPFRVDRLKTGTPPRIDARSVDFSVLEAQHGDNPTPVFSFMGDRTHHPRQIPCFITHTNEQTHEVIRNNLDRSPMYAGIIEGIGPRYCPSIEDKVMRFADKNSHQIFIEPEGLTTHELYPNGISTSLPFDVQVQIVRSMKGFENAHIVRPGYAIEYDFFDPRDLKQTYETKFIQGLFFAGQINGTTGYEEAAAQGLMAGLNASLFSQEKEGWSPRRDQAYMGVLIDDLSTMGTKEPYRMFTSRAEHRLLLREDNADLRLTEKARELGLVDDARWARFNQKIDNMEQERQRLKSTWMNPASTGIEELNQLLKSPMNREASGEDLLRRPEMTYEQLTSLAAFAPALDDLEAAEQVEIQVKYEGYIKRQQDEIEKSLRHEHTKLPADLDYSDVKGLSNEVVLKLNTAKPETLGIASRISGITPAAISILLVHLKKIGMLKVGEENA.

FAD is bound by residues 13–18 (GGGHAG), Val125, and Ser180. 273–287 (GPRYCPSIEDKVMRF) contributes to the NAD(+) binding site. Gln370 is a binding site for FAD.

Belongs to the MnmG family. In terms of assembly, homodimer. Heterotetramer of two MnmE and two MnmG subunits. Requires FAD as cofactor.

The protein resides in the cytoplasm. In terms of biological role, NAD-binding protein involved in the addition of a carboxymethylaminomethyl (cmnm) group at the wobble position (U34) of certain tRNAs, forming tRNA-cmnm(5)s(2)U34. This is tRNA uridine 5-carboxymethylaminomethyl modification enzyme MnmG from Vibrio vulnificus (strain CMCP6).